The primary structure comprises 553 residues: Probable malate:quinone oxidoreductase (553 aa).

The disordered stretch occupies residues 524 to 553 (PPPKIDLGAPSQATGNAPARPAKASADMAL).

The protein belongs to the MQO family. The cofactor is FAD.

It carries out the reaction (S)-malate + a quinone = a quinol + oxaloacetate. It participates in carbohydrate metabolism; tricarboxylic acid cycle; oxaloacetate from (S)-malate (quinone route): step 1/1. In Burkholderia cenocepacia (strain HI2424), this protein is Probable malate:quinone oxidoreductase.